The primary structure comprises 182 residues: Crossover junction endodeoxyribonuclease RuvC (182 aa).

Catalysis depends on residues Asp7, Glu69, and Asp141. 3 residues coordinate Mg(2+): Asp7, Glu69, and Asp141.

It belongs to the RuvC family. Homodimer which binds Holliday junction (HJ) DNA. The HJ becomes 2-fold symmetrical on binding to RuvC with unstacked arms; it has a different conformation from HJ DNA in complex with RuvA. In the full resolvosome a probable DNA-RuvA(4)-RuvB(12)-RuvC(2) complex forms which resolves the HJ. Mg(2+) serves as cofactor.

It is found in the cytoplasm. The catalysed reaction is Endonucleolytic cleavage at a junction such as a reciprocal single-stranded crossover between two homologous DNA duplexes (Holliday junction).. Its function is as follows. The RuvA-RuvB-RuvC complex processes Holliday junction (HJ) DNA during genetic recombination and DNA repair. Endonuclease that resolves HJ intermediates. Cleaves cruciform DNA by making single-stranded nicks across the HJ at symmetrical positions within the homologous arms, yielding a 5'-phosphate and a 3'-hydroxyl group; requires a central core of homology in the junction. The consensus cleavage sequence is 5'-(A/T)TT(C/G)-3'. Cleavage occurs on the 3'-side of the TT dinucleotide at the point of strand exchange. HJ branch migration catalyzed by RuvA-RuvB allows RuvC to scan DNA until it finds its consensus sequence, where it cleaves and resolves the cruciform DNA. In Polaromonas sp. (strain JS666 / ATCC BAA-500), this protein is Crossover junction endodeoxyribonuclease RuvC.